Consider the following 90-residue polypeptide: Small ribosomal subunit protein bS20 (90 aa).

This sequence belongs to the bacterial ribosomal protein bS20 family.

In terms of biological role, binds directly to 16S ribosomal RNA. This is Small ribosomal subunit protein bS20 from Rickettsia akari (strain Hartford).